The following is a 152-amino-acid chain: SMN complex subunit smn1 (152 aa).

An interacts with yip11/gem2 region spans residues 26 to 51 (KKYHSIEAKGGVSDPDSRLDGEKLIS). Residues 88-110 (DNKGLSDEKPETRAAETHQEFME) are disordered. The segment covering 91–108 (GLSDEKPETRAAETHQEF) has biased composition (basic and acidic residues). The interval 130-152 (SWYYAGYYTGLAEGLAKSEQRKD) is may interact with gem8.

The protein belongs to the SMN family. In terms of assembly, homooligomer; may form homodimers and homotetramers. Part of the core SMN complex at least composed of smn1, yip11/gem2, gem6, gem7 and gem8. Part of the SMN-Sm complex. Interacts with yip11/gem2; the interaction is direct. Interacts with gem8; the interaction is direct. Interacts with proteins of the Sm complex, including smn1, smb1, smd1, smd2 and smd3.

The protein resides in the nucleus. Its function is as follows. The SMN complex catalyzes the assembly of small nuclear ribonucleoproteins (snRNPs), the building blocks of the spliceosome, and thereby plays an important role in the splicing of cellular pre-mRNAs. Most spliceosomal snRNPs contain a common set of Sm proteins smb1, smd1, smd2, smd3, sme1, smf1 and smg1 that assemble in a heptameric protein ring on the Sm site of the small nuclear RNA to form the core snRNP (Sm core). In the cytosol, the Sm proteins smd1, smd2, sme1, smf1 and smg1 (5Sm) are trapped in an inactive 6S pICln-Sm complex by the chaperone saf5 that controls the assembly of the core snRNP. To assemble core snRNPs, the SMN complex accepts the trapped 5Sm proteins from saf5 forming an intermediate. Binding of snRNA inside 5Sm triggers eviction of the SMN complex, thereby allowing binding of smd3 and smb1 to complete assembly of the core snRNP. Within the SMN complex, smn1 acts as a structural backbone and together with yip11/gem2 it gathers the Sm complex subunits. This is SMN complex subunit smn1 from Schizosaccharomyces pombe (strain 972 / ATCC 24843) (Fission yeast).